The sequence spans 75 residues: MTVIRLTRMGRNKKPFYRIVVTDSRKRRDSGWIESIGYFNPVVEPKVLKIDEERYNYWLSVGAKPSEKVKKLASK.

It belongs to the bacterial ribosomal protein bS16 family.

The sequence is that of Small ribosomal subunit protein bS16 from Aliarcobacter butzleri (strain RM4018) (Arcobacter butzleri).